The chain runs to 464 residues: ATP synthase subunit beta (464 aa).

Residue 151 to 158 (GGAGVGKT) participates in ATP binding.

This sequence belongs to the ATPase alpha/beta chains family. As to quaternary structure, F-type ATPases have 2 components, CF(1) - the catalytic core - and CF(0) - the membrane proton channel. CF(1) has five subunits: alpha(3), beta(3), gamma(1), delta(1), epsilon(1). CF(0) has three main subunits: a(1), b(2) and c(9-12). The alpha and beta chains form an alternating ring which encloses part of the gamma chain. CF(1) is attached to CF(0) by a central stalk formed by the gamma and epsilon chains, while a peripheral stalk is formed by the delta and b chains.

It is found in the cell membrane. It carries out the reaction ATP + H2O + 4 H(+)(in) = ADP + phosphate + 5 H(+)(out). In terms of biological role, produces ATP from ADP in the presence of a proton gradient across the membrane. The catalytic sites are hosted primarily by the beta subunits. This is ATP synthase subunit beta from Clostridium kluyveri (strain ATCC 8527 / DSM 555 / NBRC 12016 / NCIMB 10680 / K1).